The sequence spans 320 residues: Ferrochelatase (320 aa).

Fe cation-binding residues include histidine 194 and glutamate 275.

The protein belongs to the ferrochelatase family. In terms of assembly, monomer.

The protein localises to the cytoplasm. It carries out the reaction heme b + 2 H(+) = protoporphyrin IX + Fe(2+). The protein operates within porphyrin-containing compound metabolism; protoheme biosynthesis; protoheme from protoporphyrin-IX: step 1/1. Its function is as follows. Catalyzes the ferrous insertion into protoporphyrin IX. This chain is Ferrochelatase, found in Escherichia coli (strain SMS-3-5 / SECEC).